Reading from the N-terminus, the 260-residue chain is Coiled-coil domain-containing protein 127 (260 aa).

A coiled-coil region spans residues 76-139 (AVISEHRRAV…EKSRLQPLRN (64 aa)).

This Mus musculus (Mouse) protein is Coiled-coil domain-containing protein 127 (Ccdc127).